The chain runs to 193 residues: Spermatogenesis-associated protein 3 (193 aa).

Positions 1 to 16 (MKKVKKKKSDSRRRRN) are enriched in basic residues. The disordered stretch occupies residues 1-92 (MKKVKKKKSD…SPFLVPMEPK (92 aa)). The segment covering 17-35 (SISPQTSSDSSQQPSSETP) has biased composition (low complexity). Positions 36–48 (PSCPEPASPPSKP) are enriched in pro residues.

In terms of tissue distribution, strongly expressed in testis. Faintly expressed in epididymis, ovary, spleen, kidney, lung, heart, brain, epididymis, liver and skeletal muscle.

The protein localises to the cell projection. Its subcellular location is the cilium. It is found in the flagellum. In Mus musculus (Mouse), this protein is Spermatogenesis-associated protein 3 (Spata3).